The following is a 336-amino-acid chain: Gastrula zinc finger protein XlCGF57.1 (336 aa).

11 C2H2-type zinc fingers span residues 6–28 (YTCT…MKIH), 34–56 (FICT…MKTH), 62–84 (FTCT…LTIH), 90–112 (FSCT…MKTH), 118–140 (FTCT…MKTH), 146–168 (FTCT…LKIH), 174–196 (FTCT…LKIH), 202–224 (FTCT…MKIH), 230–252 (FSCT…LTMH), 258–280 (FTCT…TKIH), and 286–308 (FSCT…LKIH).

The protein belongs to the krueppel C2H2-type zinc-finger protein family.

The protein localises to the nucleus. In terms of biological role, may be involved in transcriptional regulation. This is Gastrula zinc finger protein XlCGF57.1 from Xenopus laevis (African clawed frog).